Consider the following 1237-residue polypeptide: MGDMKTPDFDDLLAAFDIPDIDANEAIHSGPEENEGPGGPGKPEPGVGSESEDTAAASAGDGPGVPAQASDHGLPPPDISVVSVIVKNTVCPEQSEALAGGSAGDGAQAAGVTKEGPVGPHRMQNGFGSPEPSLPGTPHSPAPPSGGTWKEKGMEGKTPLDLFAHFGPEPGDHSDPLPPSAPSPTREGALTPPPFPSSFELAQENGPGMQPPVSSPPLGALKQESCSPHHPQVLAQQGSGSSPKATDIPASASPPPVAGVPFFKQSPGHQSPLASPKVPVCQPLKEEDDDEGPVDKSSPGSPQSPSSGAEAADEDSNDSPASSSSRPLKVRIKTIKTSCGNITRTVTQVPSDPDPPAPLAEGAFLAEASLLKLSPATPTSEGPKVVSVQLGDGTRLKGTVLPVATIQNASTAMLMAASVARKAVVLPGGTATSPKMIAKNVLGLVPQALPKADGRAGLGTGGQKVNGASVVMVQPSKTATGPSTGGGTVISRTQSSLVEAFNKILNSKNLLPAYRPNLSPPAEAGLALPPTGYRCLECGDAFSLEKSLARHYDRRSMRIEVTCNHCARRLVFFNKCSLLLHAREHKDKGLVMQCSHLVMRPVALDQMVGQPDITPLLPVAVPPVSGPLALPALGKGEGAITSSAITTVAAEAPVLPLSTEPPAAPATSAYTCFRCLECKEQCRDKAGMAAHFQQLGPPAPGATSNVCPTCPMMLPNRCSFSAHQRMHKNRPPHVCPECGGNFLQANFQTHLREACLHVSRRVGYRCPSCSVVFGGVNSIKSHIQTSHCEVFHKCPICPMAFKSGPSAHAHLYSQHPSFQTQQAKLIYKCAMCDTVFTHKPLLSSHFDQHLLPQRVSVFKCPSCPLLFAQKRTMLEHLKNTHQSGRLEETAGKGAGGALLTPKTEPEELAVSQGGAAPATEESSSSSEEEEVPSSPEPPRPAKRPRRELGSKGLKGGGGGPGGWTCGLCHSWFPERDEYVAHMKKEHGKSVKKFPCRLCERSFCSAPSLRRHVRVNHEGIKRVYPCRYCTEGKRTFSSRLILEKHVQVRHGLQLGAQSPGRGTTLARGSSARAQGPGRKRRQSSDSCSEEPDSTTPPAKSPRGGPGSGGHGPLRYRSSSSTEQSLMMGLRVEDGAQQCLDCGLCFASPGSLSRHRFISHKKRRGVGKASALGLGDGEEEAPPSRSDPDGGDSPLPASGGPLTCKVCGKSCDSPLNLKTHFRTHGMAFIRARQGAVGDN.

Disordered regions lie at residues 1-80 (MGDM…PDIS) and 96-330 (EALA…PLKV). The segment covering 97–111 (ALAGGSAGDGAQAAG) has biased composition (low complexity). 3 positions are modified to phosphoserine: S102, S129, and S140. Pro residues predominate over residues 132–144 (PSLPGTPHSPAPP). T148 carries the phosphothreonine modification. Phosphoserine is present on residues S227, S242, S251, S253, S266, and S271. Positions 234–244 (LAQQGSGSSPK) are enriched in polar residues. K285 is covalently cross-linked (Glycyl lysine isopeptide (Lys-Gly) (interchain with G-Cter in SUMO2)). A compositionally biased stretch (low complexity) spans 297 to 310 (SSPGSPQSPSSGAE). Glycyl lysine isopeptide (Lys-Gly) (interchain with G-Cter in SUMO2) cross-links involve residues K336 and K372. Residue S374 is modified to Phosphoserine. T377 is modified (phosphothreonine). Residues K384, K397, and K422 each participate in a glycyl lysine isopeptide (Lys-Gly) (interchain with G-Cter in SUMO2) cross-link. Phosphoserine is present on S433. Residues K435, K439, K451, and K464 each participate in a glycyl lysine isopeptide (Lys-Gly) (interchain with G-Cter in SUMO2) cross-link. At S495 the chain carries Phosphoserine. The segment at 533–552 (YRCLECGDAFSLEKSLARHY) adopts a C2H2-type 1; degenerate zinc-finger fold. 5 C2H2-type zinc fingers span residues 705–727 (NVCP…QRMH), 764–787 (YRCP…QTSH), 792–815 (HKCP…YSQH), 827–849 (YKCA…FDQH), and 858–881 (FKCP…KNTH). Residues 880–890 (THQSGRLEETA) show a composition bias toward basic and acidic residues. The segment at 880-957 (THQSGRLEET…LGSKGLKGGG (78 aa)) is disordered. T900 carries the phosphothreonine modification. Residues 915 to 925 (AAPATEESSSS) show a composition bias toward low complexity. A Glycyl lysine isopeptide (Lys-Gly) (interchain with G-Cter in SUMO2) cross-link involves residue K954. C2H2-type zinc fingers lie at residues 963–986 (WTCG…KKEH) and 993–1016 (FPCR…RVNH). Residue K1043 forms a Glycyl lysine isopeptide (Lys-Gly) (interchain with G-Cter in SUMO2) linkage. The segment at 1051 to 1121 (LQLGAQSPGR…LRYRSSSSTE (71 aa)) is disordered. Phosphoserine is present on S1057. R1060 is subject to Omega-N-methylarginine. S1082, S1083, and S1085 each carry phosphoserine. Omega-N-methylarginine is present on R1101. 2 positions are modified to phosphoserine: S1106 and S1118. The segment at 1135–1158 (QQCLDCGLCFASPGSLSRHRFISH) adopts a C2H2-type 9 zinc-finger fold. Residues 1159–1195 (KKRRGVGKASALGLGDGEEEAPPSRSDPDGGDSPLPA) are disordered. Phosphoserine is present on residues S1184, S1191, and S1211. The C2H2-type 10 zinc-finger motif lies at 1200–1222 (LTCKVCGKSCDSPLNLKTHFRTH).

This sequence belongs to the krueppel C2H2-type zinc-finger protein family. Interacts with ZMYND8. As to expression, widely expressed with highest levels in obvary, muscle, blood and lung.

It is found in the cytoplasm. The protein localises to the nucleus. In terms of biological role, may be involved in transcriptional regulation. In Homo sapiens (Human), this protein is Zinc finger protein 687 (ZNF687).